The chain runs to 187 residues: Intermembrane transport lipoprotein PqiC (187 aa).

Residues 1–15 form the signal peptide; it reads MKKWLVTIAALWLAG. A lipid anchor (N-palmitoyl cysteine) is attached at Cys16. The S-diacylglycerol cysteine moiety is linked to residue Cys16.

In terms of assembly, may form a complex composed of PqiA, PqiB and PqiC. Interacts with PqiB.

It localises to the cell outer membrane. In terms of biological role, component of a transport pathway that contributes to membrane integrity. This is Intermembrane transport lipoprotein PqiC from Escherichia coli (strain K12).